A 313-amino-acid chain; its full sequence is Ornithine carbamoyltransferase (313 aa).

Residues 57–60 (STRT), glutamine 84, arginine 108, and 135–138 (HPTQ) each bind carbamoyl phosphate. Residues asparagine 167, aspartate 231, and 235-236 (SM) each bind L-ornithine. Carbamoyl phosphate is bound by residues 272-273 (CL) and arginine 300.

The protein belongs to the aspartate/ornithine carbamoyltransferase superfamily. OTCase family.

Its subcellular location is the cytoplasm. The catalysed reaction is carbamoyl phosphate + L-ornithine = L-citrulline + phosphate + H(+). Its pathway is amino-acid biosynthesis; L-arginine biosynthesis; L-arginine from L-ornithine and carbamoyl phosphate: step 1/3. Functionally, reversibly catalyzes the transfer of the carbamoyl group from carbamoyl phosphate (CP) to the N(epsilon) atom of ornithine (ORN) to produce L-citrulline. The chain is Ornithine carbamoyltransferase from Caldanaerobacter subterraneus subsp. tengcongensis (strain DSM 15242 / JCM 11007 / NBRC 100824 / MB4) (Thermoanaerobacter tengcongensis).